The sequence spans 276 residues: Large ribosomal subunit protein uL2 (276 aa).

The interval 224–258 is disordered; that stretch reads VAMNPVDHPHGGGEGRTGEGRVPVSPWGTPTKGYR. A compositionally biased stretch (basic and acidic residues) spans 230-242; sequence DHPHGGGEGRTGE.

This sequence belongs to the universal ribosomal protein uL2 family. In terms of assembly, part of the 50S ribosomal subunit. Forms a bridge to the 30S subunit in the 70S ribosome.

Functionally, one of the primary rRNA binding proteins. Required for association of the 30S and 50S subunits to form the 70S ribosome, for tRNA binding and peptide bond formation. It has been suggested to have peptidyltransferase activity; this is somewhat controversial. Makes several contacts with the 16S rRNA in the 70S ribosome. This Polynucleobacter necessarius subsp. necessarius (strain STIR1) protein is Large ribosomal subunit protein uL2.